The following is a 479-amino-acid chain: Dynein regulatory complex subunit 4 (479 aa).

3 coiled-coil regions span residues 28–93, 117–170, and 210–347; these read RDQL…LADI, RAEA…FNEK, and EVEE…GLKE.

It belongs to the DRC4 family.

It is found in the cytoplasm. The protein localises to the cytoskeleton. It localises to the flagellum basal body. Cytoskeletal linker which probably functions in axonemal and non-axonemal dynein regulation. May play a role in the spermatozoa motility. This is Dynein regulatory complex subunit 4 from Drosophila melanogaster (Fruit fly).